The chain runs to 510 residues: Alpha-L-arabinofuranosidase B (510 aa).

The first 24 residues, 1–24 (MTMSRSSRSSVLALALATGSLVAA), serve as a signal peptide directing secretion. The tract at residues 25–342 (GPCDIYSSGG…ADIVAAKYAT (318 aa)) is catalytic. Intrachain disulfides connect C27–C37, C87–C92, and C182–C183. N-linked (GlcNAc...) asparagine glycosylation occurs at N89. D225 is a binding site for substrate. Residue E227 is the Nucleophile of the active site. Positions 228 and 303 each coordinate substrate. D304 functions as the Proton donor in the catalytic mechanism. An ABD region spans residues 343–510 (TSLISGPALT…VSWVVADGFA (168 aa)). C412 and C450 are disulfide-bonded. Residues H427, N429, F430, D446, H475, E477, L480, and D500 each contribute to the substrate site.

Belongs to the glycosyl hydrolase 54 family.

It is found in the secreted. The catalysed reaction is Hydrolysis of terminal non-reducing alpha-L-arabinofuranoside residues in alpha-L-arabinosides.. It participates in glycan metabolism; L-arabinan degradation. Its function is as follows. Alpha-L-arabinofuranosidase involved in the degradation of arabinoxylan, a major component of plant hemicellulose. Able to hydrolyze 1,5-, 1,3- and 1,2-alpha-linkages not only in L-arabinofuranosyl oligosaccharides, but also in polysaccharides containing terminal non-reducing L-arabinofuranoses in side chains, like L-arabinan, arabinogalactan and arabinoxylan. The protein is Alpha-L-arabinofuranosidase B (abfB) of Emericella nidulans (strain FGSC A4 / ATCC 38163 / CBS 112.46 / NRRL 194 / M139) (Aspergillus nidulans).